Reading from the N-terminus, the 288-residue chain is Putative sugar uptake protein gbs2116 (288 aa).

A run of 10 helical transmembrane segments spans residues 4 to 26, 33 to 50, 55 to 72, 85 to 107, 117 to 134, 154 to 171, 181 to 200, 207 to 229, 234 to 256, and 268 to 285; these read LLIA…KIGG, FGMT…WLFK, TASL…WSVG, VSVA…GALV, FILG…FYFS, FATI…AVLF, AVIL…FMKF, VVVK…LLAA, LAIA…ILFL, and VVMG…LGIV.

It belongs to the GRP transporter (TC 2.A.7.5) family.

It is found in the cell membrane. The sequence is that of Putative sugar uptake protein gbs2116 from Streptococcus agalactiae serotype III (strain NEM316).